We begin with the raw amino-acid sequence, 132 residues long: Holo-[acyl-carrier-protein] synthase (132 aa).

The Mg(2+) site is built by aspartate 8 and glutamate 64.

Belongs to the P-Pant transferase superfamily. AcpS family. Mg(2+) serves as cofactor.

Its subcellular location is the cytoplasm. The catalysed reaction is apo-[ACP] + CoA = holo-[ACP] + adenosine 3',5'-bisphosphate + H(+). In terms of biological role, transfers the 4'-phosphopantetheine moiety from coenzyme A to a Ser of acyl-carrier-protein. This chain is Holo-[acyl-carrier-protein] synthase, found in Shewanella sediminis (strain HAW-EB3).